Here is a 297-residue protein sequence, read N- to C-terminus: N-acetylmuramic acid 6-phosphate etherase (297 aa).

An SIS domain is found at 55–218 (ITKHFKQGGR…STGAMVGIGK (164 aa)). The active-site Proton donor is glutamate 83. Residue glutamate 114 is part of the active site.

This sequence belongs to the GCKR-like family. MurNAc-6-P etherase subfamily. Homodimer.

The catalysed reaction is N-acetyl-D-muramate 6-phosphate + H2O = N-acetyl-D-glucosamine 6-phosphate + (R)-lactate. It participates in amino-sugar metabolism; N-acetylmuramate degradation. Its function is as follows. Specifically catalyzes the cleavage of the D-lactyl ether substituent of MurNAc 6-phosphate, producing GlcNAc 6-phosphate and D-lactate. The protein is N-acetylmuramic acid 6-phosphate etherase of Oenococcus oeni (strain ATCC BAA-331 / PSU-1).